We begin with the raw amino-acid sequence, 52 residues long: ATP synthase protein 8 (52 aa).

A helical transmembrane segment spans residues 6–26 (PLLWLNLFLMFSATFVMFIVL).

Belongs to the ATPase protein 8 family. In terms of assembly, F-type ATPases have 2 components, CF(1) - the catalytic core - and CF(0) - the membrane proton channel.

The protein localises to the mitochondrion membrane. Functionally, mitochondrial membrane ATP synthase (F(1)F(0) ATP synthase or Complex V) produces ATP from ADP in the presence of a proton gradient across the membrane which is generated by electron transport complexes of the respiratory chain. F-type ATPases consist of two structural domains, F(1) - containing the extramembraneous catalytic core and F(0) - containing the membrane proton channel, linked together by a central stalk and a peripheral stalk. During catalysis, ATP synthesis in the catalytic domain of F(1) is coupled via a rotary mechanism of the central stalk subunits to proton translocation. Part of the complex F(0) domain. Minor subunit located with subunit a in the membrane. The chain is ATP synthase protein 8 (MT-ATP8) from Penaeus monodon (Giant tiger prawn).